Consider the following 649-residue polypeptide: Extracellular metalloproteinase 4 (649 aa).

Positions 1–18 (MHGLLLAGLLALPSNVLG) are cleaved as a signal peptide. Residues 19 to 260 (HPAEPPNSVN…VHGVVDYVAS (242 aa)) constitute a propeptide that is removed on maturation. Histidine 443 contributes to the Zn(2+) binding site. Glutamate 444 is an active-site residue. Position 447 (histidine 447) interacts with Zn(2+). 2 N-linked (GlcNAc...) asparagine glycosylation sites follow: asparagine 494 and asparagine 609.

The protein belongs to the peptidase M36 family. Requires Zn(2+) as cofactor.

The protein localises to the secreted. Its function is as follows. Secreted metalloproteinase probably acting as a virulence factor. The chain is Extracellular metalloproteinase 4 (MEP4) from Arthroderma otae (strain ATCC MYA-4605 / CBS 113480) (Microsporum canis).